Consider the following 220-residue polypeptide: VQ motif-containing protein 5 (220 aa).

The short motif at 49-57 is the VQ element; sequence FKSLVQQLT. 2 disordered regions span residues 61-80 and 131-171; these read PCDR…PEPI and HMMA…GASS. 2 stretches are compositionally biased toward polar residues: residues 133–150 and 157–171; these read MAQS…QSNG and SWFN…GASS.

It is found in the nucleus. Its function is as follows. May function as negative regulator of plant defense. The protein is VQ motif-containing protein 5 of Arabidopsis thaliana (Mouse-ear cress).